The chain runs to 696 residues: Catalase (696 aa).

Catalysis depends on residues His-64 and Asn-137. The tract at residues Ser-187 to Lys-211 is disordered. The segment covering Ala-189–Glu-208 has biased composition (polar residues). Tyr-353 provides a ligand contact to heme.

The protein belongs to the catalase family. The cofactor is heme.

The catalysed reaction is 2 H2O2 = O2 + 2 H2O. Its function is as follows. Occurs in almost all aerobically respiring organisms and serves to protect cells from the toxic effects of hydrogen peroxide. The polypeptide is Catalase (Penicillium janthinellum (Penicillium vitale)).